Reading from the N-terminus, the 290-residue chain is Ribosomal RNA small subunit methyltransferase A (290 aa).

Residues N27, L29, G54, E75, D100, and N125 each coordinate S-adenosyl-L-methionine.

The protein belongs to the class I-like SAM-binding methyltransferase superfamily. rRNA adenine N(6)-methyltransferase family. RsmA subfamily.

The protein resides in the cytoplasm. It catalyses the reaction adenosine(1518)/adenosine(1519) in 16S rRNA + 4 S-adenosyl-L-methionine = N(6)-dimethyladenosine(1518)/N(6)-dimethyladenosine(1519) in 16S rRNA + 4 S-adenosyl-L-homocysteine + 4 H(+). Functionally, specifically dimethylates two adjacent adenosines (A1518 and A1519) in the loop of a conserved hairpin near the 3'-end of 16S rRNA in the 30S particle. May play a critical role in biogenesis of 30S subunits. This chain is Ribosomal RNA small subunit methyltransferase A, found in Streptococcus pneumoniae (strain Hungary19A-6).